Reading from the N-terminus, the 234-residue chain is Phosphoribosylaminoimidazole-succinocarboxamide synthase (234 aa).

The protein belongs to the SAICAR synthetase family.

The catalysed reaction is 5-amino-1-(5-phospho-D-ribosyl)imidazole-4-carboxylate + L-aspartate + ATP = (2S)-2-[5-amino-1-(5-phospho-beta-D-ribosyl)imidazole-4-carboxamido]succinate + ADP + phosphate + 2 H(+). Its pathway is purine metabolism; IMP biosynthesis via de novo pathway; 5-amino-1-(5-phospho-D-ribosyl)imidazole-4-carboxamide from 5-amino-1-(5-phospho-D-ribosyl)imidazole-4-carboxylate: step 1/2. The chain is Phosphoribosylaminoimidazole-succinocarboxamide synthase from Streptococcus uberis (strain ATCC BAA-854 / 0140J).